The following is a 115-amino-acid chain: Con-Ins G1a (115 aa).

The first 24 residues, 1-24 (MTTSSYFLLMALGLLLYVCQSSFG), serve as a signal peptide directing secretion. The propeptide occupies 25–29 (NQHTR). At proline 34 the chain carries 4-hydroxyproline; partial. 3 cysteine pairs are disulfide-bonded: cysteine 38/cysteine 101, cysteine 50/cysteine 114, and cysteine 100/cysteine 105. Glutamate 41 is subject to 4-carboxyglutamate. Positions 53-94 (KRNDAGEKRGRASPLWQRRGSLSKLKARAKRNGAFHLPRDGR) are cleaved as a propeptide — c peptide. 4-carboxyglutamate is present on glutamate 98. Proline 104 bears the 4-hydroxyproline; partial mark. Glutamate 109 carries the post-translational modification 4-carboxyglutamate; partial. Cysteine 114 carries the cysteine amide modification.

This sequence belongs to the insulin family. As to quaternary structure, heterodimer of A and B chains; disulfide-linked. In terms of tissue distribution, expressed by the venom gland.

The protein localises to the secreted. Its function is as follows. This venom insulin, from a fish-hunting cone snail, facilitates prey capture by rapidly inducing hypoglycemic shock. It is one of the smallest known insulin found in nature and lacks the C-terminal segment of the B chain that, in human insulin, mediates engagement of the insulin receptor (INSR) and assembly of the hormone's hexameric storage form. Despite lacking this segment, it both binds and activates human insulin receptor (long isoform (HIR-B)) with a high potency (EC(50)=16.28 nM). In vivo, intraperitoneal injection of this peptide into zebrafish lowers blood glucose with the same potency than human insulin. In addition, when applied to water, this peptide reduces overall locomotor activity of zebrafish larvae, observed as a significant decrease in the percentage of time spent swimming and movement frequency. When tested on a mouse model of diabetes, this insulin also lowers blood glucose with a 10-fold lower potency than human insulin. The chain is Con-Ins G1a from Conus geographus (Geography cone).